Reading from the N-terminus, the 716-residue chain is 1,4-alpha-glucan branching enzyme GlgB (716 aa).

Aspartate 399 functions as the Nucleophile in the catalytic mechanism. Residue glutamate 452 is the Proton donor of the active site.

It belongs to the glycosyl hydrolase 13 family. GlgB subfamily. Monomer.

The enzyme catalyses Transfers a segment of a (1-&gt;4)-alpha-D-glucan chain to a primary hydroxy group in a similar glucan chain.. It participates in glycan biosynthesis; glycogen biosynthesis. Catalyzes the formation of the alpha-1,6-glucosidic linkages in glycogen by scission of a 1,4-alpha-linked oligosaccharide from growing alpha-1,4-glucan chains and the subsequent attachment of the oligosaccharide to the alpha-1,6 position. In Rhodopseudomonas palustris (strain HaA2), this protein is 1,4-alpha-glucan branching enzyme GlgB.